A 187-amino-acid polypeptide reads, in one-letter code: UPF0301 protein ECA3925 (187 aa).

This sequence belongs to the UPF0301 (AlgH) family.

This chain is UPF0301 protein ECA3925, found in Pectobacterium atrosepticum (strain SCRI 1043 / ATCC BAA-672) (Erwinia carotovora subsp. atroseptica).